A 591-amino-acid chain; its full sequence is L-fucose isomerase (591 aa).

Active-site proton acceptor residues include Glu-337 and Asp-361. The Mn(2+) site is built by Glu-337, Asp-361, and His-528.

Belongs to the L-fucose isomerase family. As to quaternary structure, homohexamer. Requires Mn(2+) as cofactor.

The protein localises to the cytoplasm. The enzyme catalyses L-fucose = L-fuculose. The protein operates within carbohydrate degradation; L-fucose degradation; L-lactaldehyde and glycerone phosphate from L-fucose: step 1/3. Its function is as follows. Converts the aldose L-fucose into the corresponding ketose L-fuculose. The chain is L-fucose isomerase from Citrobacter koseri (strain ATCC BAA-895 / CDC 4225-83 / SGSC4696).